Here is a 403-residue protein sequence, read N- to C-terminus: Na(+)-translocating NADH-quinone reductase subunit B (403 aa).

9 consecutive transmembrane segments (helical) span residues 56–76, 121–141, 164–184, 225–245, 260–280, 287–307, 312–332, 348–368, and 371–391; these read MMII…YNVG, AYFL…EVLF, LPPS…VVLG, GFAG…NILG, GSMG…LLLT, IVAG…AIGS, MFAM…GMIF, WLFG…NPAF, and GMML…HFVV. Position 230 is an FMN phosphoryl threonine (Thr230).

The protein belongs to the NqrB/RnfD family. Composed of six subunits; NqrA, NqrB, NqrC, NqrD, NqrE and NqrF. FMN is required as a cofactor.

The protein localises to the cell inner membrane. It carries out the reaction a ubiquinone + n Na(+)(in) + NADH + H(+) = a ubiquinol + n Na(+)(out) + NAD(+). Its function is as follows. NQR complex catalyzes the reduction of ubiquinone-1 to ubiquinol by two successive reactions, coupled with the transport of Na(+) ions from the cytoplasm to the periplasm. NqrA to NqrE are probably involved in the second step, the conversion of ubisemiquinone to ubiquinol. The polypeptide is Na(+)-translocating NADH-quinone reductase subunit B (Pseudomonas aeruginosa (strain LESB58)).